Consider the following 311-residue polypeptide: 4-hydroxy-3-methylbut-2-enyl diphosphate reductase (311 aa).

C12 is a binding site for [4Fe-4S] cluster. The (2E)-4-hydroxy-3-methylbut-2-enyl diphosphate site is built by H43 and H81. The dimethylallyl diphosphate site is built by H43 and H81. Isopentenyl diphosphate contacts are provided by H43 and H81. C103 is a [4Fe-4S] cluster binding site. H131 contributes to the (2E)-4-hydroxy-3-methylbut-2-enyl diphosphate binding site. Position 131 (H131) interacts with dimethylallyl diphosphate. H131 provides a ligand contact to isopentenyl diphosphate. E133 (proton donor) is an active-site residue. A (2E)-4-hydroxy-3-methylbut-2-enyl diphosphate-binding site is contributed by T170. C198 is a [4Fe-4S] cluster binding site. Residues S226, N228, and S271 each coordinate (2E)-4-hydroxy-3-methylbut-2-enyl diphosphate. Dimethylallyl diphosphate is bound by residues S226, N228, and S271. Residues S226, N228, and S271 each contribute to the isopentenyl diphosphate site.

It belongs to the IspH family. The cofactor is [4Fe-4S] cluster.

The enzyme catalyses isopentenyl diphosphate + 2 oxidized [2Fe-2S]-[ferredoxin] + H2O = (2E)-4-hydroxy-3-methylbut-2-enyl diphosphate + 2 reduced [2Fe-2S]-[ferredoxin] + 2 H(+). The catalysed reaction is dimethylallyl diphosphate + 2 oxidized [2Fe-2S]-[ferredoxin] + H2O = (2E)-4-hydroxy-3-methylbut-2-enyl diphosphate + 2 reduced [2Fe-2S]-[ferredoxin] + 2 H(+). It participates in isoprenoid biosynthesis; dimethylallyl diphosphate biosynthesis; dimethylallyl diphosphate from (2E)-4-hydroxy-3-methylbutenyl diphosphate: step 1/1. It functions in the pathway isoprenoid biosynthesis; isopentenyl diphosphate biosynthesis via DXP pathway; isopentenyl diphosphate from 1-deoxy-D-xylulose 5-phosphate: step 6/6. Catalyzes the conversion of 1-hydroxy-2-methyl-2-(E)-butenyl 4-diphosphate (HMBPP) into a mixture of isopentenyl diphosphate (IPP) and dimethylallyl diphosphate (DMAPP). Acts in the terminal step of the DOXP/MEP pathway for isoprenoid precursor biosynthesis. The sequence is that of 4-hydroxy-3-methylbut-2-enyl diphosphate reductase from Brevibacillus brevis (strain 47 / JCM 6285 / NBRC 100599).